A 459-amino-acid chain; its full sequence is Phosphoenolpyruvate carboxylase (459 aa).

The protein belongs to the PEPCase type 2 family. As to quaternary structure, homotetramer. It depends on Mg(2+) as a cofactor.

The enzyme catalyses oxaloacetate + phosphate = phosphoenolpyruvate + hydrogencarbonate. Catalyzes the irreversible beta-carboxylation of phosphoenolpyruvate (PEP) to form oxaloacetate (OAA), a four-carbon dicarboxylic acid source for the tricarboxylic acid cycle. The protein is Phosphoenolpyruvate carboxylase of Pyrobaculum calidifontis (strain DSM 21063 / JCM 11548 / VA1).